A 354-amino-acid polypeptide reads, in one-letter code: Peptide chain release factor 1 (354 aa).

Residue Gln-230 is modified to N5-methylglutamine.

This sequence belongs to the prokaryotic/mitochondrial release factor family. In terms of processing, methylated by PrmC. Methylation increases the termination efficiency of RF1.

The protein resides in the cytoplasm. Its function is as follows. Peptide chain release factor 1 directs the termination of translation in response to the peptide chain termination codons UAG and UAA. This is Peptide chain release factor 1 from Thermus thermophilus (strain ATCC BAA-163 / DSM 7039 / HB27).